Consider the following 308-residue polypeptide: Homoserine kinase (308 aa).

P95–A105 serves as a coordination point for ATP.

This sequence belongs to the GHMP kinase family. Homoserine kinase subfamily.

The protein localises to the cytoplasm. The catalysed reaction is L-homoserine + ATP = O-phospho-L-homoserine + ADP + H(+). Its pathway is amino-acid biosynthesis; L-threonine biosynthesis; L-threonine from L-aspartate: step 4/5. Its function is as follows. Catalyzes the ATP-dependent phosphorylation of L-homoserine to L-homoserine phosphate. The chain is Homoserine kinase from Corynebacterium diphtheriae (strain ATCC 700971 / NCTC 13129 / Biotype gravis).